We begin with the raw amino-acid sequence, 565 residues long: NAD-dependent malic enzyme (565 aa).

Y104 functions as the Proton donor in the catalytic mechanism. Residue R157 participates in NAD(+) binding. K175 acts as the Proton acceptor in catalysis. A divalent metal cation-binding residues include E246, D247, and D270. The NAD(+) site is built by D270 and N418.

Belongs to the malic enzymes family. Homotetramer. Mg(2+) is required as a cofactor. Mn(2+) serves as cofactor.

The catalysed reaction is (S)-malate + NAD(+) = pyruvate + CO2 + NADH. The enzyme catalyses oxaloacetate + H(+) = pyruvate + CO2. This Yersinia pseudotuberculosis serotype O:1b (strain IP 31758) protein is NAD-dependent malic enzyme.